A 522-amino-acid polypeptide reads, in one-letter code: Putative aldehyde dehydrogenase-like protein C21C3 (522 aa).

The Proton acceptor role is filled by glutamate 239. Cysteine 273 acts as the Nucleophile in catalysis.

This sequence belongs to the aldehyde dehydrogenase family.

The protein localises to the cytoplasm. Its subcellular location is the nucleus. The protein is Putative aldehyde dehydrogenase-like protein C21C3 of Schizosaccharomyces pombe (strain 972 / ATCC 24843) (Fission yeast).